A 322-amino-acid chain; its full sequence is Quinolinate synthase (322 aa).

Residues H38 and S55 each contribute to the iminosuccinate site. C100 is a binding site for [4Fe-4S] cluster. Iminosuccinate is bound by residues 126–128 (YIN) and S143. [4Fe-4S] cluster is bound at residue C186. Iminosuccinate-binding positions include 212–214 (HPE) and T229. C279 provides a ligand contact to [4Fe-4S] cluster.

This sequence belongs to the quinolinate synthase family. Type 2 subfamily. The cofactor is [4Fe-4S] cluster.

It is found in the cytoplasm. It carries out the reaction iminosuccinate + dihydroxyacetone phosphate = quinolinate + phosphate + 2 H2O + H(+). It participates in cofactor biosynthesis; NAD(+) biosynthesis; quinolinate from iminoaspartate: step 1/1. Functionally, catalyzes the condensation of iminoaspartate with dihydroxyacetone phosphate to form quinolinate. The sequence is that of Quinolinate synthase from Cyanothece sp. (strain PCC 7425 / ATCC 29141).